Reading from the N-terminus, the 74-residue chain is DNA-directed RNA polymerase subunit omega (74 aa).

Belongs to the RNA polymerase subunit omega family. In terms of assembly, the RNAP catalytic core consists of 2 alpha, 1 beta, 1 beta' and 1 omega subunit. When a sigma factor is associated with the core the holoenzyme is formed, which can initiate transcription.

It catalyses the reaction RNA(n) + a ribonucleoside 5'-triphosphate = RNA(n+1) + diphosphate. Functionally, promotes RNA polymerase assembly. Latches the N- and C-terminal regions of the beta' subunit thereby facilitating its interaction with the beta and alpha subunits. The protein is DNA-directed RNA polymerase subunit omega of Helicobacter pylori (strain P12).